Reading from the N-terminus, the 284-residue chain is MKVMTTIQALTAEIQAAKQAHKTIGLVPTMGYLHEGHLTLAQTARAENDLVVMSIFVNPTQFGPNEDFESYPRDLPRDIALAESVGVDLVFAPSVEEMYPQDGGIRIHAGEQATILCGASRPGHFDGVLQVVAKLFHLTLPTRAYFGQKDAQQVAIITTMVRDFNFPLDMRVVPIVREEDGLAKSSRNIYLSESEREEAPAIHEALQLARDSFLATGDVREALAKAKAHIQIQTHGRIDYIELLAYPDLTPVTETTQQVLLAAAVYIGKTRLIDNSIFTVKEGL.

Residue 30–37 (MGYLHEGH) coordinates ATP. Histidine 37 (proton donor) is an active-site residue. A (R)-pantoate-binding site is contributed by glutamine 61. Glutamine 61 provides a ligand contact to beta-alanine. ATP is bound at residue 147-150 (GQKD). Glutamine 153 contributes to the (R)-pantoate binding site. ATP-binding positions include valine 176 and 184 to 187 (KSSR).

The protein belongs to the pantothenate synthetase family. In terms of assembly, homodimer.

The protein localises to the cytoplasm. It catalyses the reaction (R)-pantoate + beta-alanine + ATP = (R)-pantothenate + AMP + diphosphate + H(+). It functions in the pathway cofactor biosynthesis; (R)-pantothenate biosynthesis; (R)-pantothenate from (R)-pantoate and beta-alanine: step 1/1. In terms of biological role, catalyzes the condensation of pantoate with beta-alanine in an ATP-dependent reaction via a pantoyl-adenylate intermediate. The protein is Pantothenate synthetase of Lysinibacillus sphaericus (strain C3-41).